A 295-amino-acid chain; its full sequence is Alpha-soluble NSF attachment protein (295 aa).

An N-acetylmethionine modification is found at Met-1. Phosphoserine occurs at positions 26, 29, and 195.

This sequence belongs to the SNAP family. Interacts with PRKCABP, and disrupts the interaction between GRIA2 and PRKCABP, leading to the internalization of GRIA2. Found in a complex with VAMP8. Component of a SNARE-like complex that contains at least ZW10, USE1L, RINT1, STX18 and NAPA/SNAP-alpha. Interacts with VTI1A. Interacts with STX12. Interacts with GNA12 (via N-terminus); the interaction promotes CDH5 localization to plasma membrane.

It localises to the cell membrane. Functionally, required for vesicular transport between the endoplasmic reticulum and the Golgi apparatus. Together with GNA12 promotes CDH5 localization to plasma membrane. This chain is Alpha-soluble NSF attachment protein (NAPA), found in Homo sapiens (Human).